The following is a 428-amino-acid chain: Tubby-like F-box protein 5 (428 aa).

Residues 17–65 (IGSMSRRAADGRAGGGRGGSRHSWPVLWSEQQQPPQQQQLQRQEHQQQQ) form a disordered region. Low complexity predominate over residues 47–65 (QQQPPQQQQLQRQEHQQQQ). One can recognise an F-box domain in the interval 65 to 117 (QGRWANLPPELLLDVIQRVEASEATWPARRQVVACAAVCRSWREVTKEVVKTL).

Belongs to the TUB family. Ubiquitous.

This is Tubby-like F-box protein 5 (TULP5) from Oryza sativa subsp. japonica (Rice).